The sequence spans 298 residues: Probable phosphite transport system-binding protein HtxB (298 aa).

Positions 1 to 33 (MQVFTLFSKFKKALTRAILAFIATIIVCTPAQA) are cleaved as a signal peptide.

Belongs to the phosphate/phosphite/phosphonate binding protein family.

Probably forms part of a binding-protein-dependent hypophosphite transporter. This Stutzerimonas stutzeri (Pseudomonas stutzeri) protein is Probable phosphite transport system-binding protein HtxB (htxB).